A 541-amino-acid polypeptide reads, in one-letter code: uncharacterized protein (541 aa).

The next 6 membrane-spanning stretches (helical) occupy residues 57–77, 90–110, 144–164, 167–187, 221–241, and 257–277; these read LVVT…TIAI, LTFG…SYAL, VGHL…YGLI, AFIP…ATAT, MVVW…MAMF, and VLII…ILAW. An HAMP domain is found at 278 to 329; sequence LTATPVRVVRAALRRVERGELRTNLVVFDGTELGELQRGFNAMVAGLRERER. In terms of domain architecture, Guanylate cyclase spans 361-485; the sequence is AVVFIDIVGS…EPVNEAARLC (125 aa).

Belongs to the adenylyl cyclase class-3 family.

It localises to the cell membrane. This is an uncharacterized protein from Mycobacterium tuberculosis (strain CDC 1551 / Oshkosh).